Reading from the N-terminus, the 178-residue chain is Large ribosomal subunit protein bL25 (178 aa).

This sequence belongs to the bacterial ribosomal protein bL25 family. CTC subfamily. As to quaternary structure, part of the 50S ribosomal subunit; part of the 5S rRNA/L5/L18/L25 subcomplex. Contacts the 5S rRNA. Binds to the 5S rRNA independently of L5 and L18.

This is one of the proteins that binds to the 5S RNA in the ribosome where it forms part of the central protuberance. This Sulfurimonas denitrificans (strain ATCC 33889 / DSM 1251) (Thiomicrospira denitrificans (strain ATCC 33889 / DSM 1251)) protein is Large ribosomal subunit protein bL25.